Here is a 233-residue protein sequence, read N- to C-terminus: ATP synthase subunit a (233 aa).

A run of 6 helical transmembrane segments spans residues 27 to 47 (ANFVTMQLLVVAIIVVLFAIL), 85 to 105 (YLAFFGTIFIFILFANLIGVV), 114 to 134 (VPSVPAGCAIAAFFYYNIVGV), 143 to 163 (LAHFAGPMPLLAPLMIPIELV), 189 to 209 (VFLKLTFLFVPAVFMGLHVFV), and 210 to 230 (SFLQAYIFMLLTMMYVAGAVA).

The protein belongs to the ATPase A chain family. F-type ATPases have 2 components, CF(1) - the catalytic core - and CF(0) - the membrane proton channel. CF(1) has five subunits: alpha(3), beta(3), gamma(1), delta(1), epsilon(1). CF(0) has three main subunits: a(1), b(2) and c(9-12). The alpha and beta chains form an alternating ring which encloses part of the gamma chain. CF(1) is attached to CF(0) by a central stalk formed by the gamma and epsilon chains, while a peripheral stalk is formed by the delta and b chains.

Its subcellular location is the cell inner membrane. In terms of biological role, key component of the proton channel; it plays a direct role in the translocation of protons across the membrane. In Solibacter usitatus (strain Ellin6076), this protein is ATP synthase subunit a.